The following is a 482-amino-acid chain: Ribosomal protein S6 kinase beta-2 (482 aa).

Residues 1–26 form a disordered region; it reads MAAVFDLDLETEEGSEGEGEPELSPA. A compositionally biased stretch (acidic residues) spans 7-21; it reads LDLETEEGSEGEGEP. A Phosphoserine modification is found at serine 15. Positions 67 to 328 constitute a Protein kinase domain; that stretch reads FELLRVLGKG…AADVQRHPFF (262 aa). ATP-binding positions include 73-81 and lysine 99; that span reads LGKGGYGKV. Aspartate 194 serves as the catalytic Proton acceptor. An AGC-kinase C-terminal domain is found at 329–399; that stretch reads RHMNWDDLLA…VAPSVLDSIK (71 aa). The tract at residues 407-482 is disordered; that stretch reads KLRSPRRLNS…SKRGRGRPGR (76 aa). Residues serine 417 and serine 423 each carry the phosphoserine modification. Residues 437-466 show a composition bias toward pro residues; that stretch reads PSLPEPTELPLPPLLPPPPPSTTAPLPIRP. Positions 471 to 477 match the Nuclear localization signal motif; that stretch reads KKSKRGR. Basic residues predominate over residues 471 to 482; that stretch reads KKSKRGRGRPGR. Phosphoserine; by PKC is present on serine 473.

This sequence belongs to the protein kinase superfamily. AGC Ser/Thr protein kinase family. S6 kinase subfamily. In terms of processing, phosphorylated and activated by MTOR. Phosphorylation by PKC within the NLS in response to mitogenic stimuli causes cytoplasmic retention.

The protein localises to the cytoplasm. It localises to the nucleus. It carries out the reaction L-seryl-[protein] + ATP = O-phospho-L-seryl-[protein] + ADP + H(+). The catalysed reaction is L-threonyl-[protein] + ATP = O-phospho-L-threonyl-[protein] + ADP + H(+). In terms of biological role, phosphorylates specifically ribosomal protein S6. Seems to act downstream of mTOR signaling in response to growth factors and nutrients to promote cell proliferation, cell growth and cell cycle progression in an alternative pathway regulated by MEAK7. This is Ribosomal protein S6 kinase beta-2 (RPS6KB2) from Homo sapiens (Human).